The sequence spans 123 residues: Potassium voltage-gated channel subfamily E member 2 (123 aa).

N-linked (GlcNAc...) asparagine glycosylation is found at Asn6 and Asn29. The helical transmembrane segment at 49–69 threads the bilayer; that stretch reads VILYLMVMIGMFSFIIVAILV. Residues 70 to 123 lie on the Cytoplasmic side of the membrane; that stretch reads STVKSKRREHSNDPYHQYIVEDWQEKYKSQILNLEESKATIHENIGAAGFKMSP.

Belongs to the potassium channel KCNE family. Interacts with KCNB1. Associates with KCNH2/ERG1. May associate with KCNQ2 and KCNQ3. Associates with HCN1 and probably HCN2. Heteromultimer with KCNC2. Interacts with KCNC2. Interacts with KCNQ1; forms a heterooligomer complex that targets to the membrane raft and leading to currents with an apparently instantaneous activation, a rapid deactivation process and a linear current-voltage relationship and decreases the amplitude of the outward current. As to expression, highly expressed in brain, heart, skeletal muscle, pancreas, placenta, kidney, colon and thymus. A small but significant expression is found in liver, ovary, testis, prostate, small intestine and leukocytes. Very low expression, nearly undetectable, in lung and spleen.

The protein resides in the cell membrane. Its subcellular location is the apical cell membrane. Its function is as follows. Ancillary protein that functions as a regulatory subunit of the voltage-gated potassium (Kv) channel complex composed of pore-forming and potassium-conducting alpha subunits and of regulatory beta subunits. KCNE2 beta subunit modulates the gating kinetics and enhances stability of the channel complex. Alters the gating of the delayed rectifier Kv channel containing KCNB1 alpha subunit. Associates with KCNH2/HERG alpha subunit Kv channel to form the rapidly activating component of the delayed rectifying potassium current (IKr) in heart. May associate with KCNQ2 and/or KCNQ3 alpha subunits to modulate the native M-type current. May associate with HCN1 and HCN2 channel subunits to increase potassium current. Forms a heterooligomer complex with KCNQ1/KVLQT1 alpha subunits which leads to currents with an apparently instantaneous activation, a rapid deactivation process and a linear current-voltage relationship and decreases the amplitude of the outward current. KCNQ1-KCNE2 channel associates with Na(+)-coupled myo-inositol symporter in the apical membrane of choroid plexus epithelium and regulates the myo-inositol gradient between blood and cerebrospinal fluid with an impact on neuron excitability. The sequence is that of Potassium voltage-gated channel subfamily E member 2 from Homo sapiens (Human).